The primary structure comprises 336 residues: Anthranilate phosphoribosyltransferase (336 aa).

5-phospho-alpha-D-ribose 1-diphosphate-binding positions include Gly81, Gly84–Asp85, Ser89, Asn91–Thr94, Lys109–Ser117, and Ala121. Gly81 provides a ligand contact to anthranilate. Residue Ser93 coordinates Mg(2+). Asn112 serves as a coordination point for anthranilate. Position 167 (Arg167) interacts with anthranilate. Positions 225 and 226 each coordinate Mg(2+).

The protein belongs to the anthranilate phosphoribosyltransferase family. In terms of assembly, homodimer. The cofactor is Mg(2+).

It carries out the reaction N-(5-phospho-beta-D-ribosyl)anthranilate + diphosphate = 5-phospho-alpha-D-ribose 1-diphosphate + anthranilate. It participates in amino-acid biosynthesis; L-tryptophan biosynthesis; L-tryptophan from chorismate: step 2/5. Its function is as follows. Catalyzes the transfer of the phosphoribosyl group of 5-phosphorylribose-1-pyrophosphate (PRPP) to anthranilate to yield N-(5'-phosphoribosyl)-anthranilate (PRA). The protein is Anthranilate phosphoribosyltransferase of Mesorhizobium japonicum (strain LMG 29417 / CECT 9101 / MAFF 303099) (Mesorhizobium loti (strain MAFF 303099)).